Here is a 184-residue protein sequence, read N- to C-terminus: Ribosome-recycling factor (184 aa).

The interval 137 to 158 (DSIKAKQKDGIPEDEAKRGQDE) is disordered.

It belongs to the RRF family.

It is found in the cytoplasm. Responsible for the release of ribosomes from messenger RNA at the termination of protein biosynthesis. May increase the efficiency of translation by recycling ribosomes from one round of translation to another. This Desulforamulus reducens (strain ATCC BAA-1160 / DSM 100696 / MI-1) (Desulfotomaculum reducens) protein is Ribosome-recycling factor.